We begin with the raw amino-acid sequence, 223 residues long: Uracil-DNA glycosylase (223 aa).

Asp-61 acts as the Proton acceptor in catalysis.

This sequence belongs to the uracil-DNA glycosylase (UDG) superfamily. UNG family.

The protein resides in the cytoplasm. It carries out the reaction Hydrolyzes single-stranded DNA or mismatched double-stranded DNA and polynucleotides, releasing free uracil.. Excises uracil residues from the DNA which can arise as a result of misincorporation of dUMP residues by DNA polymerase or due to deamination of cytosine. In Histophilus somni (strain 129Pt) (Haemophilus somnus), this protein is Uracil-DNA glycosylase.